Consider the following 588-residue polypeptide: Adenine deaminase (588 aa).

The protein belongs to the metallo-dependent hydrolases superfamily. Adenine deaminase family. As to quaternary structure, homodimer. Requires Mn(2+) as cofactor.

It carries out the reaction adenine + H2O + H(+) = hypoxanthine + NH4(+). The protein is Adenine deaminase of Escherichia coli O157:H7 (strain EC4115 / EHEC).